Here is a 353-residue protein sequence, read N- to C-terminus: Iron(III) enterobactin esterase (353 aa).

This sequence belongs to the Fes family.

It is found in the cytoplasm. It carries out the reaction Fe(III)-enterobactin + 3 H2O + H(+) = Fe(III)-[N-(2,3-dihydroxybenzoyl)-L-serine] + 2 N-(2,3-dihydroxybenzoyl)-L-serine. It catalyses the reaction Fe(III)-enterobactin + H2O = Fe(III)-[N-(2,3-dihydroxybenzoyl)-L-serine]3 + H(+). The enzyme catalyses Fe(III)-[N-(2,3-dihydroxybenzoyl)-L-serine]3 + H2O + H(+) = Fe(III)-[N-(2,3-dihydroxybenzoyl)-L-serine]2 + N-(2,3-dihydroxybenzoyl)-L-serine. The catalysed reaction is Fe(III)-[N-(2,3-dihydroxybenzoyl)-L-serine]2 + H2O + H(+) = Fe(III)-[N-(2,3-dihydroxybenzoyl)-L-serine] + N-(2,3-dihydroxybenzoyl)-L-serine. Its function is as follows. Catalyzes the hydrolysis of ferric enterobactin (Fe-Ent). Is responsible for the release of iron from ferric enterobactin. The polypeptide is Iron(III) enterobactin esterase (Yersinia enterocolitica).